Here is a 107-residue protein sequence, read N- to C-terminus: Nucleoid-associated protein GDI3467/Gdia_2910 (107 aa).

The protein belongs to the YbaB/EbfC family. In terms of assembly, homodimer.

It localises to the cytoplasm. The protein localises to the nucleoid. In terms of biological role, binds to DNA and alters its conformation. May be involved in regulation of gene expression, nucleoid organization and DNA protection. This is Nucleoid-associated protein GDI3467/Gdia_2910 from Gluconacetobacter diazotrophicus (strain ATCC 49037 / DSM 5601 / CCUG 37298 / CIP 103539 / LMG 7603 / PAl5).